A 610-amino-acid chain; its full sequence is MDAPEESIRMTSDPQSKIYVQNPDTHIHLEQGPSAKSGNGRALVLCSVSVACLSGLLMGYEMSLISGALLQLRDVLTLSCPEQEQVVGSLLLGAFLLSLGGGTILDHYGRRFTIILTALLCVLGTLLSVCVVSFWALVVGRMLVGMSVALSGTASCLYAAEVAPAAWRGRCVCVYELMVVLGMLLGFGLSWAFAGVPDGWRFTFGGALLPALLQAGVMPLLPDSPRFLLAQQREKEAHATLLRLRAGIKEVEPVEDELRAIRLAMGAERLHGFLDLFQSRDNMLQRLLVGAALVFLQQATGQPNILAYASTVLSSVGFHGNEAATLASTGFGVVKVGGTIPAIFLVDKVGPKALLCVGVVVMMLSTATLGAITMQSRTHVSSLCRGPGNTANFTLFETGDETDIQTNTPLGLYQPQNKLKTNTFLTSINDTREHWILNHTYNHRTALMETAELSKKDSAKIALQSLHEVSPSLKWISLVSLLVYVAGFSISLGPMVHVVLSAIFPTGIRGKAVSVISAFNWATNLLISMTFLTLTERIGLPTVIFSYSAMSFLLVVFVIVFVPETKGRSLEQISKELAMKNHLRGTLLCHRRKHKATAQPSQEEKALATV.

At 1-49 (MDAPEESIRMTSDPQSKIYVQNPDTHIHLEQGPSAKSGNGRALVLCSVS) the chain is on the cytoplasmic side. A helical membrane pass occupies residues 50-70 (VACLSGLLMGYEMSLISGALL). Topologically, residues 71-84 (QLRDVLTLSCPEQE) are extracellular. A helical membrane pass occupies residues 85–105 (QVVGSLLLGAFLLSLGGGTIL). The Cytoplasmic portion of the chain corresponds to 106 to 118 (DHYGRRFTIILTA). Residues 119-139 (LLCVLGTLLSVCVVSFWALVV) form a helical membrane-spanning segment. Over 140 to 141 (GR) the chain is Extracellular. A helical membrane pass occupies residues 142–162 (MLVGMSVALSGTASCLYAAEV). Topologically, residues 163 to 176 (APAAWRGRCVCVYE) are cytoplasmic. A helical transmembrane segment spans residues 177–197 (LMVVLGMLLGFGLSWAFAGVP). Residues 198-201 (DGWR) are Extracellular-facing. A helical transmembrane segment spans residues 202 to 222 (FTFGGALLPALLQAGVMPLLP). Over 223–286 (DSPRFLLAQQ…FQSRDNMLQR (64 aa)) the chain is Cytoplasmic. A helical transmembrane segment spans residues 287–307 (LLVGAALVFLQQATGQPNILA). At 308-325 (YASTVLSSVGFHGNEAAT) the chain is on the extracellular side. A helical transmembrane segment spans residues 326-346 (LASTGFGVVKVGGTIPAIFLV). Residues 347-353 (DKVGPKA) lie on the Cytoplasmic side of the membrane. Residues 354–374 (LLCVGVVVMMLSTATLGAITM) traverse the membrane as a helical segment. Topologically, residues 375–475 (QSRTHVSSLC…LHEVSPSLKW (101 aa)) are extracellular. 3 N-linked (GlcNAc...) asparagine glycosylation sites follow: asparagine 392, asparagine 429, and asparagine 438. Residues 476–496 (ISLVSLLVYVAGFSISLGPMV) traverse the membrane as a helical segment. The Cytoplasmic portion of the chain corresponds to 497 to 511 (HVVLSAIFPTGIRGK). A helical membrane pass occupies residues 512-532 (AVSVISAFNWATNLLISMTFL). Residues 533 to 542 (TLTERIGLPT) are Extracellular-facing. Residues 543–563 (VIFSYSAMSFLLVVFVIVFVP) traverse the membrane as a helical segment. Residues 564–610 (ETKGRSLEQISKELAMKNHLRGTLLCHRRKHKATAQPSQEEKALATV) lie on the Cytoplasmic side of the membrane.

This sequence belongs to the major facilitator superfamily. Sugar transporter (TC 2.A.1.1) family. Glucose transporter subfamily. In terms of tissue distribution, expressed in the main insulin-sensitive tissues, such as cardiac muscle, skeletal muscle and adipose tissue.

It is found in the cell membrane. It localises to the endomembrane system. The protein localises to the cytoplasm. Its subcellular location is the perinuclear region. The enzyme catalyses D-glucose(out) = D-glucose(in). Insulin-regulated facilitative glucose transporter. This is Solute carrier family 2, facilitated glucose transporter member 12 from Danio rerio (Zebrafish).